Reading from the N-terminus, the 478-residue chain is Adenosylhomocysteinase (478 aa).

Substrate is bound by residues T56, D139, and E201. 202 to 204 (TTT) is a binding site for NAD(+). Positions 231 and 235 each coordinate substrate. Residues N236, 265–270 (GYGDVG), E288, N323, 344–346 (IGH), and N392 contribute to the NAD(+) site.

This sequence belongs to the adenosylhomocysteinase family. NAD(+) serves as cofactor.

It localises to the cytoplasm. It carries out the reaction S-adenosyl-L-homocysteine + H2O = L-homocysteine + adenosine. Its pathway is amino-acid biosynthesis; L-homocysteine biosynthesis; L-homocysteine from S-adenosyl-L-homocysteine: step 1/1. May play a key role in the regulation of the intracellular concentration of adenosylhomocysteine. This chain is Adenosylhomocysteinase, found in Corynebacterium diphtheriae (strain ATCC 700971 / NCTC 13129 / Biotype gravis).